The sequence spans 97 residues: Large ribosomal subunit protein uL23 (97 aa).

This sequence belongs to the universal ribosomal protein uL23 family. In terms of assembly, part of the 50S ribosomal subunit. Contacts protein L29, and trigger factor when it is bound to the ribosome.

One of the early assembly proteins it binds 23S rRNA. One of the proteins that surrounds the polypeptide exit tunnel on the outside of the ribosome. Forms the main docking site for trigger factor binding to the ribosome. In Brucella abortus (strain S19), this protein is Large ribosomal subunit protein uL23.